The following is a 662-amino-acid chain: Glutathione hydrolase 7 (662 aa).

Topologically, residues 1–106 are cytoplasmic; sequence MAAENEASQE…AAECSCRQDG (106 aa). Phosphoserine occurs at positions 17, 72, 79, and 83. A disordered region spans residues 26–90; it reads SFPRLPEDEP…DGSPLRETRK (65 aa). The span at 72–83 shows a compositional bias: low complexity; the sequence is SSSSEMGSQDGS. A helical; Signal-anchor for type II membrane protein membrane pass occupies residues 107–127; sequence LTVIVTACLTFATGVTVALVM. The Extracellular portion of the chain corresponds to 128-662; that stretch reads QIYFGDPQIF…SLDATGASIL (535 aa). N-linked (GlcNAc...) asparagine glycosylation is found at asparagine 198, asparagine 267, asparagine 283, asparagine 330, asparagine 353, asparagine 394, asparagine 519, asparagine 523, and asparagine 586.

This sequence belongs to the gamma-glutamyltransferase family. Heterodimer composed of the light and heavy chains. The active site is located in the light chain. In terms of processing, cleaved by autocatalysis into a large and a small subunit and the autocatalytic cleavage is essential to the functional activation of the enzyme.

It is found in the membrane. The enzyme catalyses an N-terminal (5-L-glutamyl)-[peptide] + an alpha-amino acid = 5-L-glutamyl amino acid + an N-terminal L-alpha-aminoacyl-[peptide]. The catalysed reaction is glutathione + H2O = L-cysteinylglycine + L-glutamate. It catalyses the reaction an S-substituted glutathione + H2O = an S-substituted L-cysteinylglycine + L-glutamate. It functions in the pathway sulfur metabolism; glutathione metabolism. Functionally, hydrolyzes and transfers gamma-glutamyl moieties from glutathione and other gamma-glutamyl compounds to acceptors. In Rattus norvegicus (Rat), this protein is Glutathione hydrolase 7.